Reading from the N-terminus, the 232-residue chain is tRNA (guanine-N(1)-)-methyltransferase (232 aa).

S-adenosyl-L-methionine-binding positions include Gly-111 and 131-136 (IGDYIL).

This sequence belongs to the RNA methyltransferase TrmD family. In terms of assembly, homodimer.

Its subcellular location is the cytoplasm. It carries out the reaction guanosine(37) in tRNA + S-adenosyl-L-methionine = N(1)-methylguanosine(37) in tRNA + S-adenosyl-L-homocysteine + H(+). Its function is as follows. Specifically methylates guanosine-37 in various tRNAs. In Bartonella bacilliformis (strain ATCC 35685 / KC583 / Herrer 020/F12,63), this protein is tRNA (guanine-N(1)-)-methyltransferase.